Consider the following 82-residue polypeptide: uncharacterized protein (82 aa).

A run of 2 helical transmembrane segments spans residues 29–49 (LMNAGSAVADIISPIAFGIII) and 55–75 (WSLPFYGSVALLVIGIFLTFF).

The protein resides in the cell membrane. This is an uncharacterized protein from Escherichia coli (strain K12).